Here is a 521-residue protein sequence, read N- to C-terminus: Cytochrome P450 1A1 (521 aa).

Residue Phe-229 coordinates substrate. Cys-463 contributes to the heme binding site.

It belongs to the cytochrome P450 family. Requires heme as cofactor.

Its subcellular location is the endoplasmic reticulum membrane. It is found in the microsome membrane. The enzyme catalyses an organic molecule + reduced [NADPH--hemoprotein reductase] + O2 = an alcohol + oxidized [NADPH--hemoprotein reductase] + H2O + H(+). Functionally, cytochromes P450 are a group of heme-thiolate monooxygenases. They oxidize a variety of structurally unrelated compounds, including steroids, fatty acids, and xenobiotics. In Opsanus tau (Oyster toadfish), this protein is Cytochrome P450 1A1 (cyp1a1).